A 212-amino-acid polypeptide reads, in one-letter code: Thymidylate kinase (212 aa).

11-18 contributes to the ATP binding site; the sequence is GPEGAGKT.

The protein belongs to the thymidylate kinase family.

It carries out the reaction dTMP + ATP = dTDP + ADP. Phosphorylation of dTMP to form dTDP in both de novo and salvage pathways of dTTP synthesis. This Streptococcus pneumoniae (strain Hungary19A-6) protein is Thymidylate kinase.